The following is a 203-amino-acid chain: Holliday junction branch migration complex subunit RuvA (203 aa).

Positions 1–63 (MIGQLSGKVD…EEHIHLYGFL (63 aa)) are domain I. The interval 64-142 (TLEEKIFFNL…KISSGSAIIK (79 aa)) is domain II. Residues 143 to 149 (ESLNIKN) are flexible linker. Residues 150–203 (ITPVASNEVIKALVNLGFSRFEAQNAVQGIITQNPEISIDELIKTALKNRNSNF) are domain III.

It belongs to the RuvA family. In terms of assembly, homotetramer. Forms an RuvA(8)-RuvB(12)-Holliday junction (HJ) complex. HJ DNA is sandwiched between 2 RuvA tetramers; dsDNA enters through RuvA and exits via RuvB. An RuvB hexamer assembles on each DNA strand where it exits the tetramer. Each RuvB hexamer is contacted by two RuvA subunits (via domain III) on 2 adjacent RuvB subunits; this complex drives branch migration. In the full resolvosome a probable DNA-RuvA(4)-RuvB(12)-RuvC(2) complex forms which resolves the HJ.

Its subcellular location is the cytoplasm. Its function is as follows. The RuvA-RuvB-RuvC complex processes Holliday junction (HJ) DNA during genetic recombination and DNA repair, while the RuvA-RuvB complex plays an important role in the rescue of blocked DNA replication forks via replication fork reversal (RFR). RuvA specifically binds to HJ cruciform DNA, conferring on it an open structure. The RuvB hexamer acts as an ATP-dependent pump, pulling dsDNA into and through the RuvAB complex. HJ branch migration allows RuvC to scan DNA until it finds its consensus sequence, where it cleaves and resolves the cruciform DNA. The sequence is that of Holliday junction branch migration complex subunit RuvA from Rickettsia conorii (strain ATCC VR-613 / Malish 7).